The chain runs to 150 residues: Copper transporter 3 (150 aa).

2 helical membrane passes run Gly-50–Leu-70 and Leu-100–Val-120.

The protein belongs to the copper transporter (Ctr) (TC 1.A.56) family. SLC31A subfamily.

The protein localises to the membrane. Involved in the transport of copper. This is Copper transporter 3 (COPT3) from Oryza sativa subsp. japonica (Rice).